Consider the following 468-residue polypeptide: Adenylosuccinate synthetase (468 aa).

GTP is bound by residues 23–29 (GDEGKGK) and 51–53 (GHE). Aspartate 24 acts as the Proton acceptor in catalysis. Aspartate 24 and glycine 51 together coordinate Mg(2+). IMP-binding positions include 24 to 27 (DEGK), 49 to 52 (NSGH), threonine 142, arginine 156, asparagine 238, threonine 253, and arginine 317. Residue histidine 52 is the Proton donor of the active site. Substrate is bound at residue 313 to 319 (VTTGRTR). GTP-binding positions include arginine 319 and 345–347 (KLD).

It belongs to the adenylosuccinate synthetase family. Homodimer. Requires Mg(2+) as cofactor.

Its subcellular location is the cytoplasm. The enzyme catalyses IMP + L-aspartate + GTP = N(6)-(1,2-dicarboxyethyl)-AMP + GDP + phosphate + 2 H(+). Its pathway is purine metabolism; AMP biosynthesis via de novo pathway; AMP from IMP: step 1/2. In terms of biological role, plays an important role in the salvage pathway for purine nucleotide biosynthesis. Catalyzes the first committed step in the biosynthesis of AMP from IMP. This Theileria annulata protein is Adenylosuccinate synthetase.